Reading from the N-terminus, the 488-residue chain is Cysteine--tRNA ligase (488 aa).

C40 contributes to the Zn(2+) binding site. Positions 42 to 52 (MTVYDYCHIGH) match the 'HIGH' region motif. Residues C221, H246, and E250 each coordinate Zn(2+). The 'KMSKS' region motif lies at 278-282 (KMSKS). K281 provides a ligand contact to ATP.

This sequence belongs to the class-I aminoacyl-tRNA synthetase family. In terms of assembly, monomer. It depends on Zn(2+) as a cofactor.

The protein localises to the cytoplasm. It carries out the reaction tRNA(Cys) + L-cysteine + ATP = L-cysteinyl-tRNA(Cys) + AMP + diphosphate. In Psychrobacter cryohalolentis (strain ATCC BAA-1226 / DSM 17306 / VKM B-2378 / K5), this protein is Cysteine--tRNA ligase.